Reading from the N-terminus, the 250-residue chain is Histone H1.1 (250 aa).

The span at 1-11 (MSDSAVATSAS) shows a compositional bias: polar residues. Disordered regions lie at residues 1 to 52 (MSDS…QQMV) and 104 to 250 (QTKG…ATKK). One can recognise an H15 domain in the interval 44 to 118 (SHPPTQQMVD…GASGSFKLSA (75 aa)). Residues 122–133 (KDAKPKASAVEK) show a composition bias toward basic and acidic residues. Low complexity predominate over residues 140 to 161 (ASAARATKSKSSTSTTKKAAGA). The segment covering 174 to 191 (KNVEKKKADKEKAKDAKK) has biased composition (basic and acidic residues). Residues 192–234 (TGTIKAKPTTAKAKSSATKPKTPKPKTTSAKPKKVVSATTPKK) are compositionally biased toward low complexity. A compositionally biased stretch (basic residues) spans 235–250 (TAVKKPKAKTASATKK).

This sequence belongs to the histone H1/H5 family.

It localises to the nucleus. The protein localises to the chromosome. Functionally, histones H1 are necessary for the condensation of nucleosome chains into higher-order structures. In Drosophila virilis (Fruit fly), this protein is Histone H1.1 (His1.1).